Here is a 628-residue protein sequence, read N- to C-terminus: DNA mismatch repair protein MutL (628 aa).

A disordered region spans residues 350 to 402 (GLPFDVSESQGNDNHINNGKSRETKSERELYERRPNPFENRLMKESNSPSVGK). Residues 356-368 (SESQGNDNHINNG) are compositionally biased toward polar residues. Positions 369 to 393 (KSRETKSERELYERRPNPFENRLMK) are enriched in basic and acidic residues.

This sequence belongs to the DNA mismatch repair MutL/HexB family.

Its function is as follows. This protein is involved in the repair of mismatches in DNA. It is required for dam-dependent methyl-directed DNA mismatch repair. May act as a 'molecular matchmaker', a protein that promotes the formation of a stable complex between two or more DNA-binding proteins in an ATP-dependent manner without itself being part of a final effector complex. The polypeptide is DNA mismatch repair protein MutL (Wolbachia sp. subsp. Brugia malayi (strain TRS)).